We begin with the raw amino-acid sequence, 446 residues long: Glutamine synthetase (446 aa).

Residues 15 to 102 (RDIRFVRLWF…MFCDITMPDG (88 aa)) form the GS beta-grasp domain. The GS catalytic domain maps to 109–446 (SRHVLRRQLA…PYELKNYLSL (338 aa)). Residues E132 and E134 each contribute to the Mg(2+) site. Residue E184 coordinates ATP. Residues E189 and E196 each contribute to the Mg(2+) site. G241 serves as a coordination point for L-glutamate. H245 provides a ligand contact to Mg(2+). ATP is bound by residues 247 to 249 (HMS) and S249. The L-glutamate site is built by R298, E304, and R316. R316 and R321 together coordinate ATP. Residue E336 participates in Mg(2+) binding. Residue R338 coordinates L-glutamate. K363 is covalently cross-linked (Isoglutamyl lysine isopeptide (Lys-Gln) (interchain with Q-Cter in protein Pup)).

This sequence belongs to the glutamine synthetase family. As to quaternary structure, oligomer of 12 subunits arranged in the form of two hexagons. In its feedback-inhibited form, interacts with TnrA in order to block its DNA-binding activity. Requires Mg(2+) as cofactor.

Its subcellular location is the cytoplasm. The catalysed reaction is L-glutamate + NH4(+) + ATP = L-glutamine + ADP + phosphate + H(+). Inhibited by glutamine. Its function is as follows. Glutamine synthetase (GS) is an unusual multitasking protein that functions as an enzyme, a transcription coregulator, and a chaperone in ammonium assimilation and in the regulation of genes involved in nitrogen metabolism. It catalyzes the ATP-dependent biosynthesis of glutamine from glutamate and ammonia. Feedback-inhibited GlnA also interacts with and regulates the activity of the transcriptional regulator TnrA. During nitrogen limitation, TnrA is in its DNA-binding active state and turns on the transcription of genes required for nitrogen assimilation. Under conditions of nitrogen excess, feedback-inhibited GlnA forms a stable complex with TnrA, which inhibits its DNA-binding activity. In contrast, feedback-inhibited GlnA acts as a chaperone to stabilize the DNA-binding activity of GlnR, which represses the transcription of nitrogen assimilation genes. In Mycolicibacterium smegmatis (strain ATCC 700084 / mc(2)155) (Mycobacterium smegmatis), this protein is Glutamine synthetase.